A 114-amino-acid polypeptide reads, in one-letter code: Aspartate 1-decarboxylase (114 aa).

S25 (schiff-base intermediate with substrate; via pyruvic acid) is an active-site residue. A Pyruvic acid (Ser) modification is found at S25. T57 is a substrate binding site. Y58 (proton donor) is an active-site residue. Residue 73–75 (GAA) coordinates substrate.

Belongs to the PanD family. In terms of assembly, heterooctamer of four alpha and four beta subunits. It depends on pyruvate as a cofactor. In terms of processing, is synthesized initially as an inactive proenzyme, which is activated by self-cleavage at a specific serine bond to produce a beta-subunit with a hydroxyl group at its C-terminus and an alpha-subunit with a pyruvoyl group at its N-terminus.

The protein localises to the cytoplasm. It catalyses the reaction L-aspartate + H(+) = beta-alanine + CO2. The protein operates within cofactor biosynthesis; (R)-pantothenate biosynthesis; beta-alanine from L-aspartate: step 1/1. In terms of biological role, catalyzes the pyruvoyl-dependent decarboxylation of aspartate to produce beta-alanine. This chain is Aspartate 1-decarboxylase, found in Thermotoga sp. (strain RQ2).